Reading from the N-terminus, the 437-residue chain is F-box only protein 9 (437 aa).

Positions 1–29 are disordered; that stretch reads MAEAEEDCHSEAVREGDDDDENESPAETD. Residues 16–26 show a composition bias toward acidic residues; the sequence is GDDDDENESPA. The TPR repeat unit spans residues 84–117; sequence ARELFLKAVEEEQNGALYEAIKFYRRAMQLVPDI. S126 is modified (phosphoserine). The region spanning 175-226 is the F-box domain; sequence QTHISALPMEVLMYVFRWVVSSDLDLRSLEQLSQVCRGFYICARDPEIWRLA.

Part of the SCF (SKP1-CUL1-F-box) E3 ubiquitin-protein ligase complex SCF(FBXO9) composed of CUL1, SKP1, RBX1 and FBXO9. Interacts with TTI1 and TELO2; when TTI1 and TELO2 are phosphorylated by CK2.

The protein localises to the cytoplasm. The protein operates within protein modification; protein ubiquitination. Functionally, substrate recognition component of a SCF (SKP1-CUL1-F-box protein) E3 ubiquitin-protein ligase complex which mediates the ubiquitination and subsequent proteasomal degradation of target proteins and plays a role in several biological processes such as cell cycle, cell proliferation, or maintenance of chromosome stability. Ubiquitinates mTORC1-bound TTI1 and TELO2 when they are phosphorylated by CK2 following growth factor deprivation, leading to their degradation. In contrast, does not mediate ubiquitination of TTI1 and TELO2 when they are part of the mTORC2 complex. As a consequence, mTORC1 is inactivated to restrain cell growth and protein translation, while mTORC2 is the activated due to the relief of feedback inhibition by mTORC1. Plays a role in maintaining epithelial cell survival by regulating the turn-over of chromatin modulator PRMT4 through ubiquitination and degradation by the proteasomal pathway. Also regulates PPARgamma stability by facilitating PPARgamma/PPARG ubiquitination and thereby plays a role in adipocyte differentiation. The protein is F-box only protein 9 (FBXO9) of Bos taurus (Bovine).